A 198-amino-acid chain; its full sequence is NAD(P)H dehydrogenase (quinone) (198 aa).

Residues 4–189 (ILVLYYSMYG…SIARYQGEYV (186 aa)) enclose the Flavodoxin-like domain. Residues 10–15 (SMYGHI) and 78–80 (TRF) contribute to the FMN site. Y12 provides a ligand contact to NAD(+). W98 contacts substrate. Residues 113–118 (STGTGG) and H133 each bind FMN.

This sequence belongs to the WrbA family. Requires FMN as cofactor.

The catalysed reaction is a quinone + NADH + H(+) = a quinol + NAD(+). The enzyme catalyses a quinone + NADPH + H(+) = a quinol + NADP(+). The chain is NAD(P)H dehydrogenase (quinone) from Salmonella paratyphi A (strain ATCC 9150 / SARB42).